Reading from the N-terminus, the 356-residue chain is tRNA-specific 2-thiouridylase MnmA 1 (356 aa).

Residues 8–15 (GMSGGVDS) and Met34 each bind ATP. Cys103 functions as the Nucleophile in the catalytic mechanism. A disulfide bridge connects residues Cys103 and Cys199. Residue Gly127 coordinates ATP. Positions 149–151 (KDQ) are interaction with tRNA. The active-site Cysteine persulfide intermediate is the Cys199. Residues 305 to 306 (RY) are interaction with tRNA.

Belongs to the MnmA/TRMU family.

The protein localises to the cytoplasm. The enzyme catalyses S-sulfanyl-L-cysteinyl-[protein] + uridine(34) in tRNA + AH2 + ATP = 2-thiouridine(34) in tRNA + L-cysteinyl-[protein] + A + AMP + diphosphate + H(+). Its function is as follows. Catalyzes the 2-thiolation of uridine at the wobble position (U34) of tRNA, leading to the formation of s(2)U34. This is tRNA-specific 2-thiouridylase MnmA 1 from Clostridium botulinum (strain ATCC 19397 / Type A).